The sequence spans 368 residues: Glycine betaine monooxygenase reductase subunit (368 aa).

Positions 16 to 119 (NGRHNVRCVK…HGPVGDFNVI (104 aa)) constitute an FAD-binding FR-type domain. A 2Fe-2S ferredoxin-type domain is found at 284–368 (LQVEFSNSGK…TPKSHVAIEF (85 aa)). 4 residues coordinate [2Fe-2S] cluster: Cys318, Cys323, Cys326, and Cys356.

It in the N-terminal section; belongs to the FAD-binding oxidoreductase type 6 family. Monomer. The system is composed of an oxygenase subunit (BmoA) and a reductase subunit (BmoB). Maximal specific activity is obtained when the ratio of BmoA to BmoB is 5:1. Requires FAD as cofactor. [2Fe-2S] cluster is required as a cofactor.

The catalysed reaction is glycine betaine + NADH + O2 + H(+) = N,N-dimethylglycine + formaldehyde + NAD(+) + H2O. Its function is as follows. Involved in degradation of glycine betaine. Part of a Rieske-type oxygenase system that catalyzes the conversion of glycine betaine (GB) to dimethylglycine (DMG). This subunit is the ferredoxin reductase component of the system. NADH is the preferred electron donor. The chain is Glycine betaine monooxygenase reductase subunit from Chromohalobacter salexigens (strain ATCC BAA-138 / DSM 3043 / CIP 106854 / NCIMB 13768 / 1H11).